The sequence spans 707 residues: Polyribonucleotide nucleotidyltransferase (707 aa).

Aspartate 484 and aspartate 490 together coordinate Mg(2+). The region spanning proline 551–isoleucine 610 is the KH domain. Residues glycine 620–lysine 688 form the S1 motif domain. Positions lysine 688–lysine 707 are disordered. Positions aspartate 698–lysine 707 are enriched in basic and acidic residues.

The protein belongs to the polyribonucleotide nucleotidyltransferase family. Mg(2+) serves as cofactor.

The protein localises to the cytoplasm. It catalyses the reaction RNA(n+1) + phosphate = RNA(n) + a ribonucleoside 5'-diphosphate. Functionally, involved in mRNA degradation. Catalyzes the phosphorolysis of single-stranded polyribonucleotides processively in the 3'- to 5'-direction. This chain is Polyribonucleotide nucleotidyltransferase, found in Caldanaerobacter subterraneus subsp. tengcongensis (strain DSM 15242 / JCM 11007 / NBRC 100824 / MB4) (Thermoanaerobacter tengcongensis).